The chain runs to 93 residues: CRISPR-associated endoribonuclease Cas2 3 (93 aa).

Aspartate 10 provides a ligand contact to Mg(2+).

It belongs to the CRISPR-associated endoribonuclease Cas2 protein family. Homodimer, forms a heterotetramer with a Cas1 homodimer. The cofactor is Mg(2+).

In terms of biological role, CRISPR (clustered regularly interspaced short palindromic repeat), is an adaptive immune system that provides protection against mobile genetic elements (viruses, transposable elements and conjugative plasmids). CRISPR clusters contain sequences complementary to antecedent mobile elements and target invading nucleic acids. CRISPR clusters are transcribed and processed into CRISPR RNA (crRNA). Functions as a ssRNA-specific endoribonuclease. Involved in the integration of spacer DNA into the CRISPR cassette. The chain is CRISPR-associated endoribonuclease Cas2 3 from Chloroflexus aurantiacus (strain ATCC 29366 / DSM 635 / J-10-fl).